The chain runs to 565 residues: CTP synthase (565 aa).

Residues 1–272 (MARPKNVKHI…DLRVMKKLGL (272 aa)) form an amidoligase domain region. Ser-18 contacts CTP. Position 18 (Ser-18) interacts with UTP. Position 19–24 (19–24 (SLGKGI)) interacts with ATP. Tyr-59 is a binding site for L-glutamine. Residue Asp-76 participates in ATP binding. The Mg(2+) site is built by Asp-76 and Glu-146. CTP contacts are provided by residues 153–155 (DIE), 193–198 (KTKPTQ), and Lys-229. UTP contacts are provided by residues 193-198 (KTKPTQ) and Lys-229. Positions 299 to 543 (TIGVCGKYTE…VQAAKEFAMG (245 aa)) constitute a Glutamine amidotransferase type-1 domain. Gly-363 lines the L-glutamine pocket. The Nucleophile; for glutamine hydrolysis role is filled by Cys-390. Residues 391-394 (LGMQ), Glu-414, and Arg-471 each bind L-glutamine. Active-site residues include His-516 and Glu-518.

This sequence belongs to the CTP synthase family. In terms of assembly, homotetramer.

The catalysed reaction is UTP + L-glutamine + ATP + H2O = CTP + L-glutamate + ADP + phosphate + 2 H(+). The enzyme catalyses L-glutamine + H2O = L-glutamate + NH4(+). It carries out the reaction UTP + NH4(+) + ATP = CTP + ADP + phosphate + 2 H(+). The protein operates within pyrimidine metabolism; CTP biosynthesis via de novo pathway; CTP from UDP: step 2/2. Its activity is regulated as follows. Allosterically activated by GTP, when glutamine is the substrate; GTP has no effect on the reaction when ammonia is the substrate. The allosteric effector GTP functions by stabilizing the protein conformation that binds the tetrahedral intermediate(s) formed during glutamine hydrolysis. Inhibited by the product CTP, via allosteric rather than competitive inhibition. Catalyzes the ATP-dependent amination of UTP to CTP with either L-glutamine or ammonia as the source of nitrogen. Regulates intracellular CTP levels through interactions with the four ribonucleotide triphosphates. This chain is CTP synthase, found in Chlorobaculum parvum (strain DSM 263 / NCIMB 8327) (Chlorobium vibrioforme subsp. thiosulfatophilum).